The chain runs to 531 residues: Peptide chain release factor 3 (531 aa).

The tr-type G domain occupies 10-278; it reads RRRRTFAIIS…SLIDWAPAPK (269 aa). Residues 19–26, 87–91, and 141–144 contribute to the GTP site; these read SHPDAGKT, DTPGH, and NKYD.

Belongs to the TRAFAC class translation factor GTPase superfamily. Classic translation factor GTPase family. PrfC subfamily.

It localises to the cytoplasm. In terms of biological role, increases the formation of ribosomal termination complexes and stimulates activities of RF-1 and RF-2. It binds guanine nucleotides and has strong preference for UGA stop codons. It may interact directly with the ribosome. The stimulation of RF-1 and RF-2 is significantly reduced by GTP and GDP, but not by GMP. This is Peptide chain release factor 3 from Neisseria gonorrhoeae (strain NCCP11945).